Consider the following 165-residue polypeptide: Endoribonuclease YbeY (165 aa).

Positions 130, 134, and 140 each coordinate Zn(2+).

This sequence belongs to the endoribonuclease YbeY family. Zn(2+) serves as cofactor.

Its subcellular location is the cytoplasm. In terms of biological role, single strand-specific metallo-endoribonuclease involved in late-stage 70S ribosome quality control and in maturation of the 3' terminus of the 16S rRNA. The chain is Endoribonuclease YbeY from Streptococcus thermophilus (strain CNRZ 1066).